Here is a 565-residue protein sequence, read N- to C-terminus: Adenine deaminase 1 (565 aa).

It belongs to the metallo-dependent hydrolases superfamily. Adenine deaminase family. Requires Mn(2+) as cofactor.

The enzyme catalyses adenine + H2O + H(+) = hypoxanthine + NH4(+). The polypeptide is Adenine deaminase 1 (Rhizobium meliloti (strain 1021) (Ensifer meliloti)).